The following is a 359-amino-acid chain: DNA polymerase IV (359 aa).

A UmuC domain is found at 4 to 185; the sequence is IIHIDMDCYF…LSLRKIPGVG (182 aa). Residues Asp-8 and Asp-103 each coordinate Mg(2+). Glu-104 is an active-site residue.

The protein belongs to the DNA polymerase type-Y family. Monomer. Mg(2+) is required as a cofactor.

Its subcellular location is the cytoplasm. The enzyme catalyses DNA(n) + a 2'-deoxyribonucleoside 5'-triphosphate = DNA(n+1) + diphosphate. Poorly processive, error-prone DNA polymerase involved in untargeted mutagenesis. Copies undamaged DNA at stalled replication forks, which arise in vivo from mismatched or misaligned primer ends. These misaligned primers can be extended by PolIV. Exhibits no 3'-5' exonuclease (proofreading) activity. May be involved in translesional synthesis, in conjunction with the beta clamp from PolIII. The chain is DNA polymerase IV from Shewanella sp. (strain MR-7).